The chain runs to 249 residues: Transmembrane protein 150C (249 aa).

The Cytoplasmic segment spans residues 1–9 (MDGKKCSVW). A helical membrane pass occupies residues 10 to 30 (MFLPLVFTLFTSAGLWIVYFI). Over 31–64 (AVEDDKILPLNSAERKPGVKHAPYISIAGDDPPA) the chain is Extracellular. A helical membrane pass occupies residues 65 to 85 (SCVFSQVMNMAAFLALVVAVL). Residues 86–97 (RFIQLKPKVLNP) lie on the Cytoplasmic side of the membrane. The chain crosses the membrane as a helical span at residues 98–118 (WLNISGLVALCLASFGMTLLG). Residues 119 to 130 (NFQLTNDEEIHN) are Extracellular-facing. A helical membrane pass occupies residues 131–151 (VGTSLTFGFGTLTCWIQAALT). Over 152-168 (LKVNIKNEGRRVGIPRV) the chain is Cytoplasmic. Residues 169 to 189 (ILSASITLCVVLYFILMAQSI) form a helical membrane-spanning segment. At 190-192 (HMY) the chain is on the extracellular side. A helical transmembrane segment spans residues 193-213 (AARVQWGLVMCFLSYFGTFAV). Residues 214-249 (EFRHYRYEIVCSEYQENFLSFSESLSEASEYQTDQV) lie on the Cytoplasmic side of the membrane.

The protein belongs to the DRAM/TMEM150 family.

Its subcellular location is the cell membrane. The protein localises to the lysosome membrane. The enzyme catalyses Ca(2+)(in) = Ca(2+)(out). It catalyses the reaction Na(+)(in) = Na(+)(out). The catalysed reaction is K(+)(in) = K(+)(out). It carries out the reaction Mg(2+)(in) = Mg(2+)(out). Its function is as follows. Nonselective cationic channel with high permeability to Ca(2+). Component of a mechanosensitive cation channel, confers mechanically activated (MA) currents with slow inactivation kinetics. May contribute to proprioception. This Homo sapiens (Human) protein is Transmembrane protein 150C.